A 233-amino-acid chain; its full sequence is Large ribosomal subunit protein uL1 (233 aa).

The protein belongs to the universal ribosomal protein uL1 family. As to quaternary structure, part of the 50S ribosomal subunit.

Functionally, binds directly to 23S rRNA. The L1 stalk is quite mobile in the ribosome, and is involved in E site tRNA release. Protein L1 is also a translational repressor protein, it controls the translation of the L11 operon by binding to its mRNA. The polypeptide is Large ribosomal subunit protein uL1 (Shewanella putrefaciens (strain CN-32 / ATCC BAA-453)).